The sequence spans 116 residues: Ribosome-binding factor A (116 aa).

This sequence belongs to the RbfA family. In terms of assembly, monomer. Binds 30S ribosomal subunits, but not 50S ribosomal subunits or 70S ribosomes.

Its subcellular location is the cytoplasm. In terms of biological role, one of several proteins that assist in the late maturation steps of the functional core of the 30S ribosomal subunit. Associates with free 30S ribosomal subunits (but not with 30S subunits that are part of 70S ribosomes or polysomes). Required for efficient processing of 16S rRNA. May interact with the 5'-terminal helix region of 16S rRNA. In Clostridium botulinum (strain Alaska E43 / Type E3), this protein is Ribosome-binding factor A.